The chain runs to 293 residues: Ribosomal protein L11 methyltransferase (293 aa).

4 residues coordinate S-adenosyl-L-methionine: T145, G166, D188, and N230.

Belongs to the methyltransferase superfamily. PrmA family.

It localises to the cytoplasm. It catalyses the reaction L-lysyl-[protein] + 3 S-adenosyl-L-methionine = N(6),N(6),N(6)-trimethyl-L-lysyl-[protein] + 3 S-adenosyl-L-homocysteine + 3 H(+). Functionally, methylates ribosomal protein L11. In Actinobacillus succinogenes (strain ATCC 55618 / DSM 22257 / CCUG 43843 / 130Z), this protein is Ribosomal protein L11 methyltransferase.